The primary structure comprises 130 residues: Protachykinin-1 (130 aa).

The signal sequence occupies residues 1–19 (MKILVAVAVFFLVSTQLFA). The propeptide occupies 20–56 (EEIDANDDLNYWSDWSDSDQIKEAMPEPFEHLLQRIA). Methionine amide is present on residues Met68 and Met107.

The protein belongs to the tachykinin family. In terms of processing, the substance P form is cleaved at Pro-59 by the prolyl endopeptidase FAP (seprase) activity (in vitro). Substance P is also cleaved and degraded by Angiotensin-converting enzyme (ACE) and neprilysin (MME).

The protein resides in the secreted. Its function is as follows. Tachykinins are active peptides which excite neurons, evoke behavioral responses, are potent vasodilators and secretagogues, and contract (directly or indirectly) many smooth muscles. The protein is Protachykinin-1 (Tac1) of Mus musculus (Mouse).